The primary structure comprises 305 residues: Probable lipid kinase YegS-like (305 aa).

In terms of domain architecture, DAGKc spans 2–134 (HPPAPALLII…DLAKVNDQRY (133 aa)). ATP contacts are provided by residues threonine 40, 66–72 (GDGTINE), and threonine 95. Positions 215, 218, and 220 each coordinate Mg(2+). The Proton acceptor role is filled by glutamate 271.

Belongs to the diacylglycerol/lipid kinase family. YegS lipid kinase subfamily. It depends on Mg(2+) as a cofactor. Requires Ca(2+) as cofactor.

It is found in the cytoplasm. Functionally, probably phosphorylates lipids; the in vivo substrate is unknown. The sequence is that of Probable lipid kinase YegS-like from Serratia proteamaculans (strain 568).